The primary structure comprises 377 residues: Nitric oxide reductase FlRd-NAD(+) reductase (377 aa).

Belongs to the FAD-dependent oxidoreductase family. It depends on FAD as a cofactor.

It localises to the cytoplasm. It catalyses the reaction 2 reduced [nitric oxide reductase rubredoxin domain] + NAD(+) + H(+) = 2 oxidized [nitric oxide reductase rubredoxin domain] + NADH. It functions in the pathway nitrogen metabolism; nitric oxide reduction. One of at least two accessory proteins for anaerobic nitric oxide (NO) reductase. Reduces the rubredoxin moiety of NO reductase. The chain is Nitric oxide reductase FlRd-NAD(+) reductase from Salmonella newport (strain SL254).